We begin with the raw amino-acid sequence, 374 residues long: Putative glutamate--cysteine ligase 2 (374 aa).

Belongs to the glutamate--cysteine ligase type 2 family. YbdK subfamily.

It carries out the reaction L-cysteine + L-glutamate + ATP = gamma-L-glutamyl-L-cysteine + ADP + phosphate + H(+). ATP-dependent carboxylate-amine ligase which exhibits weak glutamate--cysteine ligase activity. The sequence is that of Putative glutamate--cysteine ligase 2 from Leptothrix cholodnii (strain ATCC 51168 / LMG 8142 / SP-6) (Leptothrix discophora (strain SP-6)).